A 424-amino-acid chain; its full sequence is UPF0229 protein YPTS_2141 (424 aa).

Residues 84-109 are disordered; it reads TNDRVDRPQGGGGGGSGQGNAGKDGE. Positions 92 to 105 are enriched in gly residues; it reads QGGGGGGSGQGNAG.

This sequence belongs to the UPF0229 family.

This chain is UPF0229 protein YPTS_2141, found in Yersinia pseudotuberculosis serotype IB (strain PB1/+).